The sequence spans 341 residues: Heme A synthase (341 aa).

The next 8 membrane-spanning stretches (helical) occupy residues 7 to 27, 92 to 112, 118 to 138, 159 to 179, 190 to 210, 253 to 273, 280 to 300, and 302 to 322; these read VTVW…IGGI, LFGR…AITK, MVAK…MGWF, LFLT…CAGV, FFTA…GALV, FLHR…PFWL, LFLA…VSVV, and IFLA…GVHM. Heme is bound at residue histidine 255. Position 308 (histidine 308) interacts with heme.

It belongs to the COX15/CtaA family. Type 2 subfamily. In terms of assembly, interacts with CtaB. The cofactor is heme b.

It localises to the cell membrane. The catalysed reaction is Fe(II)-heme o + 2 A + H2O = Fe(II)-heme a + 2 AH2. Its pathway is porphyrin-containing compound metabolism; heme A biosynthesis; heme A from heme O: step 1/1. Its function is as follows. Catalyzes the conversion of heme O to heme A by two successive hydroxylations of the methyl group at C8. The first hydroxylation forms heme I, the second hydroxylation results in an unstable dihydroxymethyl group, which spontaneously dehydrates, resulting in the formyl group of heme A. The sequence is that of Heme A synthase from Anaplasma marginale (strain St. Maries).